A 76-amino-acid polypeptide reads, in one-letter code: Omega-conotoxin MoVIA (76 aa).

An N-terminal signal peptide occupies residues 1–22 (MKLTCVVIVAVLFLTACQLITA). A propeptide spanning residues 23-45 (DDSRSTQRHRALRSTTKLSMSTR) is cleaved from the precursor. Intrachain disulfides connect C46–C61, C53–C64, and C60–C71. A hydroxyproline mark is found at P49 and P55.

The protein belongs to the conotoxin O1 superfamily. As to expression, expressed by the venom duct.

The protein resides in the secreted. Functionally, omega-conotoxins act at presynaptic membranes, they bind and block voltage-gated calcium channels (Cav). This toxin potently blocks mammalian N-type calcium channels (Cav2.2/CACNA1B) (IC(50)=330 nM on human channels). It is 9-fold more potent in displacing radiolabeled omega-conotoxin GVIA from fish brain membranes than from human SH-SY5Y cells. In terms of biological role, omega-conotoxins act at presynaptic membranes, they bind and block voltage-gated calcium channels (Cav). This toxin potently blocks mammalian N-type calcium channels (Cav2.2/CACNA1B) (IC(50)=600 nM on human channels). It is 60-fold more potent in displacing radiolabeled omega-conotoxin GVIA from fish brain membranes than from human SH-SY5Y cells. In vivo, when tested on rat neuropathic pain model, this toxin shows an analgesic activity. This Conus moncuri (Sea snail) protein is Omega-conotoxin MoVIA.